Here is a 171-residue protein sequence, read N- to C-terminus: Nicotinamide-nucleotide adenylyltransferase (171 aa).

Belongs to the archaeal NMN adenylyltransferase family.

The protein localises to the cytoplasm. The enzyme catalyses beta-nicotinamide D-ribonucleotide + ATP + H(+) = diphosphate + NAD(+). It functions in the pathway cofactor biosynthesis; NAD(+) biosynthesis; NAD(+) from nicotinamide D-ribonucleotide: step 1/1. This chain is Nicotinamide-nucleotide adenylyltransferase, found in Methanococcus maripaludis (strain DSM 14266 / JCM 13030 / NBRC 101832 / S2 / LL).